The chain runs to 200 residues: dITP/XTP pyrophosphatase (200 aa).

A substrate-binding site is contributed by 7–12; that stretch reads TSNKHK. Residues E38 and D73 each contribute to the Mg(2+) site. The active-site Proton acceptor is D73. Residues S74, 154–157, K177, and 182–183 contribute to the substrate site; these read FGYD and HR.

This sequence belongs to the HAM1 NTPase family. Homodimer. The cofactor is Mg(2+).

It catalyses the reaction XTP + H2O = XMP + diphosphate + H(+). The enzyme catalyses dITP + H2O = dIMP + diphosphate + H(+). It carries out the reaction ITP + H2O = IMP + diphosphate + H(+). Functionally, pyrophosphatase that catalyzes the hydrolysis of nucleoside triphosphates to their monophosphate derivatives, with a high preference for the non-canonical purine nucleotides XTP (xanthosine triphosphate), dITP (deoxyinosine triphosphate) and ITP. Seems to function as a house-cleaning enzyme that removes non-canonical purine nucleotides from the nucleotide pool, thus preventing their incorporation into DNA/RNA and avoiding chromosomal lesions. This chain is dITP/XTP pyrophosphatase, found in Campylobacter jejuni subsp. jejuni serotype O:6 (strain 81116 / NCTC 11828).